The sequence spans 107 residues: MPKLARKQQKNLIQNIAVQRMQRLFELAKAEFPENPERSRRYVQLIRNISMRNRISIPRDIKSRICKHCYAFLVPGSNARYRLKNGYLVISCEQCGKEMRYPYKKLK.

Zn(2+)-binding residues include Cys-66, Cys-69, Cys-92, and Cys-95.

The protein belongs to the eukaryotic/archaeal RNase P protein component 4 family. As to quaternary structure, consists of a catalytic RNA component and at least 4-5 protein subunits. Requires Zn(2+) as cofactor.

Its subcellular location is the cytoplasm. It carries out the reaction Endonucleolytic cleavage of RNA, removing 5'-extranucleotides from tRNA precursor.. Functionally, part of ribonuclease P, a protein complex that generates mature tRNA molecules by cleaving their 5'-ends. The chain is Ribonuclease P protein component 4 from Methanosarcina acetivorans (strain ATCC 35395 / DSM 2834 / JCM 12185 / C2A).